A 66-amino-acid chain; its full sequence is Large ribosomal subunit protein bL33c (66 aa).

This sequence belongs to the bacterial ribosomal protein bL33 family.

The protein localises to the plastid. The protein resides in the chloroplast. This chain is Large ribosomal subunit protein bL33c, found in Coffea arabica (Arabian coffee).